Consider the following 177-residue polypeptide: Inorganic pyrophosphatase (177 aa).

Positions 29, 43, and 55 each coordinate substrate. Mg(2+)-binding residues include Asp65, Asp70, and Asp102. Tyr141 contacts substrate.

The protein belongs to the PPase family. Homohexamer. Requires Mg(2+) as cofactor.

It is found in the cytoplasm. It catalyses the reaction diphosphate + H2O = 2 phosphate + H(+). In terms of biological role, catalyzes the hydrolysis of inorganic pyrophosphate (PPi) forming two phosphate ions. The protein is Inorganic pyrophosphatase of Aquifex pyrophilus.